The primary structure comprises 158 residues: Copper transporter 2 (158 aa).

A disordered region spans residues 1 to 20 (MDHDHMHDMPPPSPSSSSMS). The next 2 membrane-spanning stretches (helical) occupy residues 53–73 (GMYALCLIVIFLLAVIAEWLA) and 104–124 (YLVMLAVMSFNAGVFIVAIAG).

This sequence belongs to the copper transporter (Ctr) (TC 1.A.56) family. SLC31A subfamily. As to expression, highly expressed in leaves and at lower levels in roots, stems and flowers.

It localises to the membrane. Functionally, involved in the transport of copper. The sequence is that of Copper transporter 2 (COPT2) from Arabidopsis thaliana (Mouse-ear cress).